The following is a 465-amino-acid chain: GTPase Der (465 aa).

2 consecutive EngA-type G domains span residues 3–166 and 184–358; these read FLVA…LNEF and IHFS…ACAN. Residues 9-16, 56-60, 118-121, 190-197, 237-241, and 302-305 each bind GTP; these read GRANVGKS, DTGGI, NKVD, GRPNVGKS, DTAGV, and NKWD. Positions 359–443 constitute a KH-like domain; it reads KKITTADATR…PIVFEFKQSE (85 aa).

It belongs to the TRAFAC class TrmE-Era-EngA-EngB-Septin-like GTPase superfamily. EngA (Der) GTPase family. In terms of assembly, associates with the 50S ribosomal subunit.

GTPase that plays an essential role in the late steps of ribosome biogenesis. This chain is GTPase Der, found in Francisella philomiragia subsp. philomiragia (strain ATCC 25017 / CCUG 19701 / FSC 153 / O#319-036).